A 1029-amino-acid chain; its full sequence is U2 snRNP-associated SURP motif-containing protein (1029 aa).

Disordered stretches follow at residues 1–111 and 141–274; these read MADK…EDEK and VNAA…PSTT. N-acetylalanine is present on alanine 2. The segment covering 7 to 16 has biased composition (polar residues); it reads GGSQKASSKT. A compositionally biased stretch (basic residues) spans 45–54; it reads TRPKSPRKHN. Basic and acidic residues predominate over residues 55-64; sequence YRNESARESL. Serine 67 is subject to Phosphoserine. A Glycyl lysine isopeptide (Lys-Gly) (interchain with G-Cter in SUMO2) cross-link involves residue lysine 80. Positions 92 to 121 form a coiled coil; that stretch reads AKRTLSKKEQEELKKKEDEKAAAEIYEEFL. 2 stretches are compositionally biased toward basic and acidic residues: residues 97 to 111 and 144 to 155; these read SKKE…EDEK and AKEEHETDEKRG. Residues lysine 145 and lysine 168 each participate in a glycyl lysine isopeptide (Lys-Gly) (interchain with G-Cter in SUMO2) cross-link. The segment covering 169-178 has biased composition (polar residues); that stretch reads NPPNQSSNER. Positions 186–222 are enriched in basic and acidic residues; it reads ETKKPPLKKGEKEKKKSNLELFKEELKQIQEERDERH. Residues 192–232 are a coiled coil; the sequence is LKKGEKEKKKSNLELFKEELKQIQEERDERHKTKGRLSRFE. Serine 202 carries the phosphoserine modification. Lysine 208 is covalently cross-linked (Glycyl lysine isopeptide (Lys-Gly) (interchain with G-Cter in SUMO2)). Phosphoserine is present on serine 236. A compositionally biased stretch (basic and acidic residues) spans 239-249; sequence DGQRRSMDAPS. Residues 274–355 enclose the RRM domain; the sequence is TNLYLGNINP…FEMKLGWGKA (82 aa). Residues 430–473 form an SURP motif repeat; sequence LIHRMIEFVVREGPMFEAMIMNREINNPMFRFLFENQTPAHVYY. Position 485 is a phosphoserine (serine 485). A CID domain is found at 534-679; that stretch reads LKEEQRDKLE…KLQNIFLGLV (146 aa). Threonine 719 is subject to Phosphothreonine. Residues lysine 748 and lysine 749 each participate in a glycyl lysine isopeptide (Lys-Gly) (interchain with G-Cter in SUMO2) cross-link. At lysine 760 the chain carries N6-acetyllysine; alternate. Lysine 760 participates in a covalent cross-link: Glycyl lysine isopeptide (Lys-Gly) (interchain with G-Cter in SUMO2); alternate. 2 disordered regions span residues 778–841 and 855–1029; these read KWEL…EEKR and QDEL…KNKH. Residues 786–806 show a composition bias toward acidic residues; the sequence is EESEEEENQNQEEESEDEEDT. Residues serine 788, serine 800, and serine 811 each carry the phosphoserine modification. 2 stretches are compositionally biased toward basic and acidic residues: residues 810-841 and 874-922; these read KSEE…EEKR and QVEH…TPTR. Glycyl lysine isopeptide (Lys-Gly) (interchain with G-Cter in SUMO2) cross-links involve residues lysine 822, lysine 829, and lysine 832. Residues 837–915 are a coiled coil; it reads SEEKRAKLRE…ESRSKDKKEK (79 aa). A Phosphothreonine modification is found at threonine 931. Serine 946 and serine 948 each carry phosphoserine. The span at 950–980 shows a compositional bias: basic and acidic residues; it reads KSERSERSERSHKESSRSRSSHKDSPRDVSK. Over residues 991–1029 the composition is skewed to basic residues; it reads TPKRSRRSRSRSPKKSGKKSRSQSRSPHRSHKKSKKNKH.

It belongs to the splicing factor SR family. Interacts with ERBB4.

Its subcellular location is the nucleus. The protein is U2 snRNP-associated SURP motif-containing protein (U2SURP) of Homo sapiens (Human).